A 344-amino-acid polypeptide reads, in one-letter code: Histone-lysine N-methyltransferase, H3 lysine-9 specific KMT1 (344 aa).

The region spanning 79 to 174 (SGCSCAKDSE…DCPNRVVERG (96 aa)) is the Pre-SET domain. Residues cysteine 81, cysteine 83, cysteine 89, cysteine 94, cysteine 96, cysteine 156, cysteine 160, cysteine 162, cysteine 166, and cysteine 272 each coordinate Zn(2+). The SET domain occupies 177 to 312 (IPLEIFRTPD…EGEELTFDYV (136 aa)). Tyrosine 311 is an S-adenosyl-L-methionine binding site. The Post-SET domain occupies 328-344 (HMTRCLCGSKKCRKFLW). Cysteine 332, cysteine 334, and cysteine 339 together coordinate Zn(2+).

This sequence belongs to the class V-like SAM-binding methyltransferase superfamily.

The protein localises to the chromosome. The enzyme catalyses L-lysyl(9)-[histone H3] + 3 S-adenosyl-L-methionine = N(6),N(6),N(6)-trimethyl-L-lysyl(9)-[histone H3] + 3 S-adenosyl-L-homocysteine + 3 H(+). Histone methyltransferase that specifically trimethylates histone H3 to form H3K9me3. H3K9me3 marks chromatin regions for DNA methylation. Plays a key role in the regulation of the biosynthesis of the gamma-pyrones fusapyrone (FPY) and deoxyfusapyrone (dFPY). In Fusarium mangiferae (Mango malformation disease fungus), this protein is Histone-lysine N-methyltransferase, H3 lysine-9 specific KMT1.